The primary structure comprises 173 residues: Lens fiber membrane intrinsic protein (173 aa).

Residues 1 to 3 lie on the Cytoplasmic side of the membrane; the sequence is MYS. A helical transmembrane segment spans residues 4–24; sequence FMGGGLFCAWVGTILLVVAMA. At 25-66 the chain is on the extracellular side; it reads TDHWMQYRLSGSFAHQGLWRYCLGNKCYLQTDSIAYWNATRA. Residues W43 and W61 are each glycosylated (C-linked (Man) tryptophan). N62 is a glycosylation site (N-linked (GlcNAc...) asparagine). A helical transmembrane segment spans residues 67-87; that stretch reads FMILSALCAISGIIMGIMAFA. The Cytoplasmic segment spans residues 88-98; that stretch reads HQPTFSRISRP. A helical membrane pass occupies residues 99-119; the sequence is FSAGIMFFSSTLFVVLALAIY. The Extracellular segment spans residues 120–140; it reads TGVTVSFLGRRFGDWRFSWSY. The helical transmembrane segment at 141–161 threads the bilayer; sequence ILGWVAVLMTFFAGIFYMCAY. The Cytoplasmic segment spans residues 162–173; that stretch reads RVHECRRLSTPR. S170 carries the phosphoserine modification. Phosphothreonine is present on T171.

The protein belongs to the PMP-22/EMP/MP20 family. As to quaternary structure, seems to be associated with itself or another lens membrane component via disulfide bonds. In terms of tissue distribution, eye lens specific.

It localises to the membrane. Functionally, present in the thicker 16-17 nm junctions of mammalian lens fiber cells, where it may contribute to cell junctional organization. Acts as a receptor for calmodulin. May play an important role in both lens development and cataractogenesis. The chain is Lens fiber membrane intrinsic protein (LIM2) from Homo sapiens (Human).